A 327-amino-acid chain; its full sequence is Phosphate acyltransferase (327 aa).

It belongs to the PlsX family. Homodimer. Probably interacts with PlsY.

The protein resides in the cytoplasm. It catalyses the reaction a fatty acyl-[ACP] + phosphate = an acyl phosphate + holo-[ACP]. It functions in the pathway lipid metabolism; phospholipid metabolism. Functionally, catalyzes the reversible formation of acyl-phosphate (acyl-PO(4)) from acyl-[acyl-carrier-protein] (acyl-ACP). This enzyme utilizes acyl-ACP as fatty acyl donor, but not acyl-CoA. This chain is Phosphate acyltransferase, found in Thermotoga neapolitana (strain ATCC 49049 / DSM 4359 / NBRC 107923 / NS-E).